The sequence spans 408 residues: Snake venom metalloproteinase BaP1 (408 aa).

The N-terminal stretch at 1-20 (MIEVLLVTICLAVFPYQGSS) is a signal peptide. Positions 21–191 (IILESGNVND…KASQSNLTPE (171 aa)) are excised as a propeptide. Position 192 is a pyrrolidone carboxylic acid (Gln-192). In terms of domain architecture, Peptidase M12B spans 198–394 (RYIELAVVAD…HNPQCILNKP (197 aa)). 3 disulfides stabilise this stretch: Cys-309–Cys-389, Cys-349–Cys-373, and Cys-351–Cys-356. His-334 contributes to the Zn(2+) binding site. Glu-335 is an active-site residue. Positions 338 and 344 each coordinate Zn(2+). Positions 395 to 408 (LLTVSGNELLEAGE) are excised as a propeptide.

This sequence belongs to the venom metalloproteinase (M12B) family. P-I subfamily. In terms of assembly, monomer. Zn(2+) serves as cofactor. In terms of tissue distribution, expressed by the venom gland.

It is found in the secreted. Inhibited by EDTA, partially inhibited by o-phenantropine, and not inhibited by PMSF, pepstatin A, and aprotinin. Functionally, zinc metalloprotease that exhibits a weak hemorrhagic activity (with a minimum hemorrhagic dose of 20 ug by intradermal and intramuscular injection into mice). The basal membrane components collagen (all chains of type IV) (COL4A4), laminin and nidogen are all degraded by this toxin. Rapidly degrades the Aalpha-chain (FGA) of fibrinogen, and later on, degrades the Bbeta-chain (FGB) of fibrinogen. Also activates the complement system, and induces rat neutrophil chemotaxis. Induces edema in mouse food pad and shows a mild myotoxicity. The sequence is that of Snake venom metalloproteinase BaP1 from Bothrops asper (Terciopelo).